We begin with the raw amino-acid sequence, 485 residues long: Sphingosine kinase 1 (485 aa).

The region spanning glycine 116–threonine 258 is the DAGKc domain. Residues asparagine 126–phenylalanine 128 and threonine 158 contribute to the ATP site. Substrate is bound at residue serine 183–glycine 186. Aspartate 185 functions as the Proton donor/acceptor in the catalytic mechanism. Residues glutamate 190 and glycine 215–glycine 217 contribute to the ATP site. Aspartate 276 contacts substrate. ATP-binding positions include arginine 283, arginine 289, and aspartate 446–glutamate 448.

It depends on Mg(2+) as a cofactor. As to expression, highly expressed in stems and flowers and at lower levels in roots, leaves and siliques.

Its subcellular location is the vacuole membrane. The catalysed reaction is a sphingoid base + ATP = a sphingoid 1-phosphate + ADP + H(+). Its activity is regulated as follows. Activated by phosphatidic acid (PA). Binding with PA stimulates the activity by promoting the binding of substrate to the catalytic site. Involved in the production of sphingolipid metabolites. Phosphorylates sphingosine and various sphingoid long-chain base (LCB) products, such as phytosphingosine (PHS, 4-hydroxysphinganine), 4-hydroxy-8-sphingenine, 4,8-sphingadienine, D-erythro-dihydrosphingosine and D,L-threo-dihydrosphingosine. Is required for abscisic acid (ABA) signaling that mediates stomatal closure, inhibition of seed germination and root elongation. May function upstream of PLDALPHA1 and phosphatidic acid (PA) in an amplification response to ABA that mediates stomatal closure. This is Sphingosine kinase 1 (SPHK1) from Arabidopsis thaliana (Mouse-ear cress).